We begin with the raw amino-acid sequence, 633 residues long: DNA mismatch repair protein MutL (633 aa).

Belongs to the DNA mismatch repair MutL/HexB family.

Its function is as follows. This protein is involved in the repair of mismatches in DNA. It is required for dam-dependent methyl-directed DNA mismatch repair. May act as a 'molecular matchmaker', a protein that promotes the formation of a stable complex between two or more DNA-binding proteins in an ATP-dependent manner without itself being part of a final effector complex. The protein is DNA mismatch repair protein MutL of Bacillus pumilus (strain SAFR-032).